We begin with the raw amino-acid sequence, 728 residues long: MSNEAKCPFHHAAGNGTSNRDWWPDQLDLSALHRHSSLSDPMDRDFNYAQAFEKLDLAAVKRDLHALMTTSQDWWPADFGHYGGLFIRMAWHSAGTYRTADGRGGAGEGQQRFAPLNSWPDNANLDKARRLLWPIKQKYGRSISWADLLILTGNVALESMGFKTFGFAGGRADTWEPEDVYWGSEKIWLELSGGPNSRYSGDRQLENPLAAVQMGLIYVNPEGPDGNPDPVAAARDIRDTFARMAMNDEETVALIAGGHTFGKTHGAGPASNVGPEPEAAGLEEQGLGWKSAYGTGKGADAITSGLEVTWTKTPTQWSNNFFENLFGYEWELTKSPAGAHQWVAKDADAVIPDAFDPSKKHRPTMLTTDLSLRFDPAYEKISRRFHEHPDEFADAFARAWFKLTHRDMGPRARYLGPEVPAEELLWQDPIPAVDHPLIDAADVAALKAQVLASGLSVSQLVSTAWAAASTFRGSDKRGGANGARIRLAPQKDWEANQPEQLATVLATLEAIRRTFNGAQSGGKRVSLADLIVLAGCAGVEQAAKNAGHAVTVPFAPGRMDASQEQTDVESMAVLEPLADGFRNYLKGKYRVPAEVLLVDKAQLLTLSAPEMTVLLGGLRVLGANAGQSRHGVFTARAQALTNDFFVNLLDMSTEWKPASADADVFEGRDRATGALKWTGTRVDLVFGSHSQLRALAEVYASADAQEKFVRDFVAVWNKVMNLDRFDLA.

The segment at residues 91-218 (WHSAGTYRTA…LAAVQMGLIY (128 aa)) is a cross-link (tryptophyl-tyrosyl-methioninium (Trp-Tyr) (with M-244)). Residue H92 is the Proton acceptor of the active site. Positions 218–244 (YVNPEGPDGNPDPVAAARDIRDTFARM) form a cross-link, tryptophyl-tyrosyl-methioninium (Tyr-Met) (with W-91). H259 is a heme b binding site.

It belongs to the peroxidase family. Peroxidase/catalase subfamily. As to quaternary structure, homodimer or homotetramer. The cofactor is heme b. Post-translationally, formation of the three residue Trp-Tyr-Met cross-link is important for the catalase, but not the peroxidase activity of the enzyme.

It carries out the reaction H2O2 + AH2 = A + 2 H2O. The enzyme catalyses 2 H2O2 = O2 + 2 H2O. Bifunctional enzyme with both catalase and broad-spectrum peroxidase activity. The chain is Catalase-peroxidase from Burkholderia thailandensis (strain ATCC 700388 / DSM 13276 / CCUG 48851 / CIP 106301 / E264).